A 338-amino-acid chain; its full sequence is MSQEFNVVVLGASGAVGQTMIEILEERNFPVAKLFPLASSRSAGGTVSFNGKQVEILDVDDFDWSQAQIGFFSAGGDVSEKWAPIAAENGCVVIDNTSQFRYDNDVPLVIPEVNPEAIADFRNRNIIANPNCSTIQMLVALKPIYDAFGISRINVATYQSVSGSGKEAITELAGQCSKLLQGLPAESKVYPKQIAFNVLPQIDKFMENGYTKEEMKMVWETQKIFGDDNIVVNPTAVRVPVFYGHSEAIHLETIQPAEAEDVKAVLREAPGIELFESNEEYPTAVTESAGTDPVYVGRVRKDISHSHGINLWVVSDNIRKGAALNSVQIAEVLIRDYY.

NADP(+)-binding positions include 13-16 and 41-42; these read SGAV and RS. Arginine 101 contributes to the phosphate binding site. Residue cysteine 132 is the Acyl-thioester intermediate of the active site. Glutamine 159 provides a ligand contact to substrate. 162–163 contacts NADP(+); that stretch reads SG. Lysine 216 is a binding site for phosphate. Arginine 238 lines the substrate pocket. Histidine 245 functions as the Proton acceptor in the catalytic mechanism. Residue asparagine 317 participates in NADP(+) binding.

This sequence belongs to the aspartate-semialdehyde dehydrogenase family. As to quaternary structure, homodimer.

The enzyme catalyses L-aspartate 4-semialdehyde + phosphate + NADP(+) = 4-phospho-L-aspartate + NADPH + H(+). Its pathway is amino-acid biosynthesis; L-lysine biosynthesis via DAP pathway; (S)-tetrahydrodipicolinate from L-aspartate: step 2/4. The protein operates within amino-acid biosynthesis; L-methionine biosynthesis via de novo pathway; L-homoserine from L-aspartate: step 2/3. It functions in the pathway amino-acid biosynthesis; L-threonine biosynthesis; L-threonine from L-aspartate: step 2/5. Functionally, catalyzes the NADPH-dependent formation of L-aspartate-semialdehyde (L-ASA) by the reductive dephosphorylation of L-aspartyl-4-phosphate. The sequence is that of Aspartate-semialdehyde dehydrogenase from Shewanella violacea (strain JCM 10179 / CIP 106290 / LMG 19151 / DSS12).